Reading from the N-terminus, the 201-residue chain is LexA repressor 1 (201 aa).

A DNA-binding region (H-T-H motif) is located at residues 27–47 (LAEIAQAFGFASRNAAQKHVQ). Active-site for autocatalytic cleavage activity residues include Ser-122 and Lys-159.

The protein belongs to the peptidase S24 family. In terms of assembly, homodimer.

The catalysed reaction is Hydrolysis of Ala-|-Gly bond in repressor LexA.. In terms of biological role, represses a number of genes involved in the response to DNA damage (SOS response), including recA and lexA. In the presence of single-stranded DNA, RecA interacts with LexA causing an autocatalytic cleavage which disrupts the DNA-binding part of LexA, leading to derepression of the SOS regulon and eventually DNA repair. This chain is LexA repressor 1, found in Xanthomonas campestris pv. campestris (strain ATCC 33913 / DSM 3586 / NCPPB 528 / LMG 568 / P 25).